The following is a 346-amino-acid chain: Phosphoribosylformylglycinamidine cyclo-ligase (346 aa).

Belongs to the AIR synthase family.

The protein resides in the cytoplasm. The catalysed reaction is 2-formamido-N(1)-(5-O-phospho-beta-D-ribosyl)acetamidine + ATP = 5-amino-1-(5-phospho-beta-D-ribosyl)imidazole + ADP + phosphate + H(+). It functions in the pathway purine metabolism; IMP biosynthesis via de novo pathway; 5-amino-1-(5-phospho-D-ribosyl)imidazole from N(2)-formyl-N(1)-(5-phospho-D-ribosyl)glycinamide: step 2/2. In Proteus mirabilis (strain HI4320), this protein is Phosphoribosylformylglycinamidine cyclo-ligase.